The following is a 354-amino-acid chain: Probable alcohol acetyltransferase (354 aa).

Catalysis depends on charge relay system residues Ser124 and His293.

This sequence belongs to the AB hydrolase superfamily.

In terms of biological role, probable alcohol acetyltransferase that uses acetyl-CoA to synthesize acetate esters from various alcohols. Not involved in the synthesis of ethyl acetate. This chain is Probable alcohol acetyltransferase (EAT2), found in Cyberlindnera jadinii (strain ATCC 18201 / CBS 1600 / BCRC 20928 / JCM 3617 / NBRC 0987 / NRRL Y-1542) (Torula yeast).